The following is a 506-amino-acid chain: Apolipoprotein N-acyltransferase (506 aa).

A run of 6 helical transmembrane segments spans residues 26–46 (FAPY…LILI), 66–86 (FASG…MPLA), 89–109 (LFLM…FTWS), 113–133 (FFAK…WLIA), 166–186 (GVEL…YAVI), and 192–212 (MLLI…WDWV). The CN hydrolase domain maps to 225-471 (IQGNVDQNLK…TAVLRAELTP (247 aa)). Glu-264 serves as the catalytic Proton acceptor. Lys-330 is a catalytic residue. Catalysis depends on Cys-382, which acts as the Nucleophile. Residues 479 to 499 (HQLGSWPLYIWVALSLALAWW) form a helical membrane-spanning segment.

The protein belongs to the CN hydrolase family. Apolipoprotein N-acyltransferase subfamily.

It localises to the cell inner membrane. The catalysed reaction is N-terminal S-1,2-diacyl-sn-glyceryl-L-cysteinyl-[lipoprotein] + a glycerophospholipid = N-acyl-S-1,2-diacyl-sn-glyceryl-L-cysteinyl-[lipoprotein] + a 2-acyl-sn-glycero-3-phospholipid + H(+). It participates in protein modification; lipoprotein biosynthesis (N-acyl transfer). Its function is as follows. Catalyzes the phospholipid dependent N-acylation of the N-terminal cysteine of apolipoprotein, the last step in lipoprotein maturation. This chain is Apolipoprotein N-acyltransferase, found in Vibrio vulnificus (strain CMCP6).